Reading from the N-terminus, the 405-residue chain is Growth/differentiation factor 11 (405 aa).

Residues 1-20 (MVLAAPLLLGFLLLALELRP) form the signal peptide. The propeptide occupies 21–296 (RGEAAEGPAA…VLENTKRSRR (276 aa)). The N-linked (GlcNAc...) asparagine glycan is linked to Asn92. 4 disulfides stabilise this stretch: Cys302-Cys312, Cys311-Cys370, Cys339-Cys402, and Cys343-Cys404.

Belongs to the TGF-beta family. In terms of assembly, homodimer; disulfide-linked. Interacts directly with ACVR2B. Interacts directly with ACVR2A. Interacts with ACVR1B, TGFBR1 and ACVR1C in an ACVR2B-dependent manner. Interacts with FST isoform 2/FS288. Post-translationally, synthesized as large precursor molecule that undergoes proteolytic cleavage by furin-like proteases. This produces an inactive form consisting of the mature C-terminal portion non-covalently bound to its cleaved N-terminal propeptide. Activation of the mature form requires additional cleavage of the propeptide by a tolloid-like metalloproteinase. In terms of tissue distribution, highly expressed in the developing limb bud, initially detected in the distal mesenchyme, and later localizing to regions around the developing bones. Is also expressed in adult dental pulp and brain.

It localises to the secreted. Functionally, secreted signal that acts globally to regulate anterior/posterior axial patterning during development. May play critical roles in patterning both mesodermal and neural tissues. It is required for proper vertebral patterning and orofacial development. Signals through activin receptors type-2, ACVR2A and ACVR2B, and activin receptors type-1, ACVR1B, ACVR1C and TGFBR1 leading to the phosphorylation of SMAD2 and SMAD3. The protein is Growth/differentiation factor 11 (Gdf11) of Mus musculus (Mouse).